We begin with the raw amino-acid sequence, 614 residues long: Numb-like protein (614 aa).

Disordered regions lie at residues 1–68, 223–283, 371–420, 448–468, and 539–614; these read MSRS…QWQA, GSFR…PVAA, FASA…LEEV, QQQQ…LQPF, and LGKA…EIEL. In terms of domain architecture, PID spans 74–223; sequence RKGTCSFPVR…ASRTSFAREG (150 aa). Phosphoserine is present on residues serine 224 and serine 228. The span at 233–245 shows a compositional bias: basic and acidic residues; sequence PAEREAGDKKKAE. The span at 246–260 shows a compositional bias: low complexity; it reads AAAAPAVAPGPAQPG. Serine 263 is subject to Phosphoserine. Threonine 279 is subject to Phosphothreonine. A compositionally biased stretch (low complexity) spans 371-390; sequence FASAGAPVPGPPSATTGTSA. Positions 409–418 are enriched in basic and acidic residues; that stretch reads TPSEAERWLE. Residue serine 411 is modified to Phosphoserine. Over residues 563–578 the composition is skewed to pro residues; sequence NGAPWPPEPAPAPAPE.

In terms of assembly, associates with EPS15 and NOTCH1. Interacts (via PTB domain) with MAP3K7IP2 (via C-terminal). Interacts (via C-terminal) with TRAF6 (via TRAF domains).

The protein localises to the cytoplasm. In terms of biological role, plays a role in the process of neurogenesis. Required throughout embryonic neurogenesis to maintain neural progenitor cells, also called radial glial cells (RGCs), by allowing their daughter cells to choose progenitor over neuronal cell fate. Not required for the proliferation of neural progenitor cells before the onset of embryonic neurogenesis. Also required postnatally in the subventricular zone (SVZ) neurogenesis by regulating SVZ neuroblasts survival and ependymal wall integrity. Negative regulator of NF-kappa-B signaling pathway. The inhibition of NF-kappa-B activation is mediated at least in part, by preventing MAP3K7IP2 to interact with polyubiquitin chains of TRAF6 and RIPK1 and by stimulating the 'Lys-48'-linked polyubiquitination and degradation of TRAF6 in cortical neurons. This chain is Numb-like protein (Numbl), found in Rattus norvegicus (Rat).